The following is a 443-amino-acid chain: Probable D-serine dehydratase (443 aa).

At Lys118 the chain carries N6-(pyridoxal phosphate)lysine.

Belongs to the serine/threonine dehydratase family. DsdA subfamily. Pyridoxal 5'-phosphate is required as a cofactor.

The catalysed reaction is D-serine = pyruvate + NH4(+). This chain is Probable D-serine dehydratase, found in Vibrio campbellii (strain ATCC BAA-1116).